A 420-amino-acid polypeptide reads, in one-letter code: MEVPPRLSHVPPPLFPSAPATLASRSLSHWRPRPPRQLAPLLPSLAPSSARQGARRAQRHVTAQQPSRLAGGAAIKGGRRRRPDLFRRHFKSSSIQRSAAAAAATRTARQHPPADSSVTMEDMNEYSNIEEFAEGSKINASKNQQDDGKMFIGGLSWDTSKKDLTEYLSRFGEVVDCTIKTDPVTGRSRGFGFVLFKDAASVDKVLELKEHKLDGKLIDPKRAKALKGKEPPKKVFVGGLSPDTSEEQIKEYFGAFGEIENIELPMDTKTNERRGFCFITYTDEEPVKKLLESRYHQIGSGKCEIKVAQPKEVYRQQQQQQKGGRGAAAGGRGGTRGRGRGQGQNWNQGFNNYYDQGYGNYNSAYGGDQNYSGYGGYDYTGYNYGNYGYGQGYADYSGQQSTYGKASRGGGNHQNNYQPY.

Disordered stretches follow at residues 1–83 (MEVP…RRRP) and 96–120 (QRSA…SVTM). Arg-25 carries the post-translational modification Omega-N-methylarginine. Low complexity predominate over residues 36–52 (RQLAPLLPSLAPSSARQ). 2 RRM domains span residues 148 to 230 (GKMF…KGKE) and 233 to 312 (KKVF…QPKE). N6-methyllysine is present on Lys-161. A Glycyl lysine isopeptide (Lys-Gly) (interchain with G-Cter in SUMO2) cross-link involves residue Lys-209. At Lys-216 the chain carries N6-acetyllysine. Position 241 is a phosphoserine (Ser-241). 2 disordered regions span residues 313–348 (VYRQ…NWNQ) and 398–420 (GQQS…YQPY). A compositionally biased stretch (gly residues) spans 323 to 342 (GGRGAAAGGRGGTRGRGRGQ). Residues 342–420 (QGQNWNQGFN…GNHQNNYQPY (79 aa)) are necessary for interaction with TNPO1. Residues 396-420 (YSGQQSTYGKASRGGGNHQNNYQPY) form a necessary for its nuclear import and export region. Arg-408 bears the Dimethylated arginine; alternate mark. Arg-408 carries the omega-N-methylarginine; alternate modification.

As to quaternary structure, interacts with ZNF148. Interacts with TNPO1. In terms of processing, dimethylation of Arg-408 is probably of the asymmetric type. As to expression, expressed in heart, brain, placenta, lung, liver, skeletal muscle, kidney, pancreas, spleen, thymus, prostate, testis, ovary, small intestine, colon and leukocytes. Expressed in myeloid leukemia, gastric adenocarcinoma, cervical carcinoma, hepatoma, fibrosarcoma, colon adenocarcinoma, epidermoid carcinoma, osteosarcoma and urinary bladder carcinoma cells.

The protein resides in the nucleus. Its subcellular location is the cytoplasm. Acts as a transcriptional regulator. Promotes transcription repression. Promotes transcription activation in differentiated myotubes. Binds to double- and single-stranded DNA sequences. Binds to the transcription suppressor CATR sequence of the COX5B promoter. Binds with high affinity to RNA molecules that contain AU-rich elements (AREs) found within the 3'-UTR of many proto-oncogenes and cytokine mRNAs. Binds both to nuclear and cytoplasmic poly(A) mRNAs. Binds to poly(G) and poly(A), but not to poly(U) or poly(C) RNA homopolymers. Binds to the 5'-ACUAGC-3' RNA consensus sequence. In Homo sapiens (Human), this protein is Heterogeneous nuclear ribonucleoprotein D-like (HNRNPDL).